We begin with the raw amino-acid sequence, 254 residues long: uncharacterized protein (254 aa).

The protein belongs to the nucleoside-specific channel-forming outer membrane porin (Tsx) (TC 1.B.10) family.

This is an uncharacterized protein from Escherichia coli (strain K12).